The sequence spans 139 residues: ATP synthase epsilon chain 2 (139 aa).

It belongs to the ATPase epsilon chain family. F-type ATPases have 2 components, CF(1) - the catalytic core - and CF(0) - the membrane proton channel. CF(1) has five subunits: alpha(3), beta(3), gamma(1), delta(1), epsilon(1). CF(0) has three main subunits: a, b and c.

The protein resides in the cell inner membrane. Its function is as follows. Produces ATP from ADP in the presence of a proton gradient across the membrane. This chain is ATP synthase epsilon chain 2 (atpC2), found in Ralstonia nicotianae (strain ATCC BAA-1114 / GMI1000) (Ralstonia solanacearum).